The primary structure comprises 615 residues: Protein DBF4 homolog B (615 aa).

Residues Ala-43 to Ser-133 form the BRCT domain. Disordered regions lie at residues Arg-93–Pro-141 and Phe-264–Met-293. Residues His-275–Pro-284 are compositionally biased toward basic and acidic residues. Residues Pro-294–Ser-343 form a DBF4-type zinc finger. The Zn(2+) site is built by Cys-301, Cys-304, His-314, and His-320. A disordered region spans residues Thr-371–Arg-407.

As to quaternary structure, forms a complex with CDC7. Note that CDC7 forms distinct complex either with DBF4/DBF4A or DBF4B. Such complexes are stable upon replication stress. Post-translationally, phosphorylated. Widely expressed. Highly expressed in testis.

It is found in the nucleus. Its function is as follows. Regulatory subunit for CDC7 which activates its kinase activity thereby playing a central role in DNA replication and cell proliferation. Required for progression of S and M phases. The complex CDC7-DBF4B selectively phosphorylates MCM2 subunit at 'Ser-40' and then is involved in regulating the initiation of DNA replication during cell cycle. In Homo sapiens (Human), this protein is Protein DBF4 homolog B (DBF4B).